Reading from the N-terminus, the 301-residue chain is Probable alpha-L-glutamate ligase (301 aa).

The region spanning 104 to 287 is the ATP-grasp domain; the sequence is LQLLSRRGVG…VAGLIIQYLE (184 aa). ATP is bound by residues Lys-141, 178–179, Asp-187, and 211–213; these read EY and RSN. Residues Asp-248, Glu-260, and Asn-262 each coordinate Mg(2+). 3 residues coordinate Mn(2+): Asp-248, Glu-260, and Asn-262.

The protein belongs to the RimK family. Mg(2+) is required as a cofactor. The cofactor is Mn(2+).

The polypeptide is Probable alpha-L-glutamate ligase (Stutzerimonas stutzeri (strain A1501) (Pseudomonas stutzeri)).